We begin with the raw amino-acid sequence, 534 residues long: Zinc finger protein 703-A (534 aa).

Disordered regions lie at residues 1 to 35 (MNCSPPGSSTDTERQSSSSGTPATPCPTLAPTHPV), 90 to 251 (SQIG…VAPV), and 300 to 320 (QLPGTLGLPGKPPSSSPLTGA). Low complexity-rich tracts occupy residues 15-34 (QSSSSGTPATPCPTLAPTHP), 115-124 (RSSSLKLGES), and 146-155 (GSSAGGSADK). Residues 173-182 (SPSSRVSSPG) are compositionally biased toward polar residues. Positions 185–200 (CDSKNNESQEKKEPEA) are enriched in basic and acidic residues. Over residues 204-217 (SLETSQANPTLTRA) the composition is skewed to polar residues. Positions 218–229 (SISNSSAESSQS) are enriched in low complexity. Polar residues predominate over residues 230–239 (GDVTPSSKSD). The C2H2-type zinc finger occupies 406–434 (HICNWVSASGPCDKRFATSEELLAHLRTH).

The protein belongs to the Elbow/Noc family.

Its subcellular location is the nucleus. It is found in the cytoplasm. In terms of biological role, transcriptional corepressor which does not bind directly to DNA and may regulate transcription through recruitment of histone deacetylases to gene promoters. Regulates cell adhesion, migration and proliferation. Involved in specification of the lateral neural plate border (NPB). May be required for segmental gene expression during hindbrain development. This Xenopus laevis (African clawed frog) protein is Zinc finger protein 703-A (znf703-a).